The sequence spans 617 residues: Alkaline/neutral invertase E, chloroplastic (617 aa).

Residues 1–45 (MAASETVLRVPLGSVSQSCYLASFFVNSTPNLSFKPVSRNRKTVR) constitute a chloroplast transit peptide. S87 bears the Phosphoserine mark.

Belongs to the glycosyl hydrolase 100 family. In terms of tissue distribution, expressed in roots, leaves and flowers.

The protein localises to the plastid. It is found in the chloroplast. The enzyme catalyses Hydrolysis of terminal non-reducing beta-D-fructofuranoside residues in beta-D-fructofuranosides.. Chloroplastic invertase that cleaves sucrose into glucose and fructose and is associated with the development of the photosynthetic apparatus and the assimilation of nitrogen in seedlings to control the sucrose to hexose ratio. Participates in the carbon flux between the cytosol and plastids in leaves. In Arabidopsis thaliana (Mouse-ear cress), this protein is Alkaline/neutral invertase E, chloroplastic.